We begin with the raw amino-acid sequence, 2033 residues long: Major viral transcription factor ICP4 homolog (2033 aa).

A compositionally biased stretch (low complexity) spans 1–16 (MFWHQPRQQQLRQLQR). Disordered regions lie at residues 1–47 (MFWH…PPSP), 95–145 (FSDP…LPAP), 157–199 (LSSS…GSSY), 218–240 (PPRS…ADRC), 277–301 (DQSP…CVGE), 313–338 (EERK…ESLP), 350–461 (AEIN…GAVA), 505–527 (SFAQ…ARQR), 719–747 (LPPD…ASRT), 1015–1064 (GKQS…GALN), 1085–1186 (LLSD…PGDP), 1294–1342 (ETWR…EGGT), 1420–1451 (ASPH…RDAA), 1531–1612 (VVFP…PPAA), 1636–1655 (RFDE…GGKP), 1664–1718 (LCEQ…SPSP), and 1746–2033 (EISP…GTER). Residues 157 to 173 (LSSSSPSGSSRGSVTSP) are compositionally biased toward low complexity. A compositionally biased stretch (basic and acidic residues) spans 223–240 (PDCRRGEPVSEDGMADRC). Residues 313–326 (EERKEAARRSPDAE) are compositionally biased toward basic and acidic residues. The span at 359–368 (ESDEAEDEDA) shows a compositional bias: acidic residues. Residues 507-518 (AQRQQPRQQQHA) are compositionally biased toward low complexity. Positions 732–741 (KSRGGRGGGS) are enriched in gly residues. The span at 1031-1056 (RATASSPRTPASRPPHGSAAAPPSGR) shows a compositional bias: low complexity. Residues 1086–1097 (LSDEAGTDDDGD) show a composition bias toward acidic residues. The segment covering 1169-1181 (SSSSFASSSLASA) has biased composition (low complexity). The span at 1294–1303 (ETWRDAEDHP) shows a compositional bias: basic and acidic residues. Residues 1575 to 1591 (SHDRSPSSSSRRRDGRP) are compositionally biased toward basic and acidic residues. Basic residues predominate over residues 1592–1602 (SSRRRPSRRMS). Basic and acidic residues-rich tracts occupy residues 1752 to 1765 (RRRD…GCRQ) and 1774 to 1795 (EGGR…DSVP). A compositionally biased stretch (low complexity) spans 1812-1843 (SAGRSSSSSSSSSSSSSSSPSSRPSRSATPSL). Residues 1853–1869 (APVDRSRSGRRRERDRP) are compositionally biased toward basic and acidic residues. A compositionally biased stretch (polar residues) spans 1912 to 1921 (TPSSATTLPS). A compositionally biased stretch (acidic residues) spans 1927–1936 (DSVDETETED). Positions 1937-1948 (SAPPARLAPSPL) are enriched in low complexity.

This sequence belongs to the herpesviridae ICP4 family. A long stretch of serine residues may be a major site of phosphorylation.

The protein resides in the host nucleus. Functionally, this IE protein is a multifunctional protein capable of migrating to the nucleus, binding to DNA, trans-activating other viral genes, and autoregulating its own synthesis. It is required for the switch from immediate-early to early mode of gene expression. The chain is Major viral transcription factor ICP4 homolog (ICP4B) from Amazona oratrix (yellow-headed parrot).